Here is a 1098-residue protein sequence, read N- to C-terminus: Ran-binding protein 16 (1098 aa).

It belongs to the exportin family. As to quaternary structure, binds to nucleoporins and the GTP-bound form of Ran.

It is found in the cytoplasm. It localises to the nucleus. Its function is as follows. May function as a nuclear transport receptor. The chain is Ran-binding protein 16 (Ranbp16) from Drosophila melanogaster (Fruit fly).